The chain runs to 100 residues: Urease subunit gamma (100 aa).

This sequence belongs to the urease gamma subunit family. Heterotrimer of UreA (gamma), UreB (beta) and UreC (alpha) subunits. Three heterotrimers associate to form the active enzyme.

The protein localises to the cytoplasm. It carries out the reaction urea + 2 H2O + H(+) = hydrogencarbonate + 2 NH4(+). It functions in the pathway nitrogen metabolism; urea degradation; CO(2) and NH(3) from urea (urease route): step 1/1. The chain is Urease subunit gamma from Rhizobium leguminosarum bv. viciae.